A 424-amino-acid chain; its full sequence is Putative ankyrin repeat protein R858 (424 aa).

ANK repeat units lie at residues 115-144, 147-177, 184-215, and 219-252; these read HLMC…FTKR, TDHT…SDYF, INDS…SINY, and TGST…DIHE.

This chain is Putative ankyrin repeat protein R858, found in Acanthamoeba polyphaga (Amoeba).